The chain runs to 289 residues: Rhodopsin (289 aa).

Topologically, residues 1 to 7 (YLVNPAA) are extracellular. A helical membrane pass occupies residues 8-32 (YAALGAYMFLLILIGFPINFLTLYV). Topologically, residues 33–44 (TLEHKKLRTPLN) are cytoplasmic. A helical membrane pass occupies residues 45–67 (YILLNLAVANLFMVLGGFTTTMY). Over 68–81 (TSMHGYFVLGRLGC) the chain is Extracellular. An intrachain disulfide couples Cys-81 to Cys-158. Residues 82-104 (NLEAFFATLGGEIALWSLVVLAI) form a helical membrane-spanning segment. Positions 105–107 (ERW) match the 'Ionic lock' involved in activated form stabilization motif. Residues 105–123 (ERWIVVCKPISNFRFTEDH) are Cytoplasmic-facing. The helical transmembrane segment at 124-144 (AIMGLAFTWVMALACAVPPLV) threads the bilayer. Over 145-173 (GWSRYIPEGMQCSCGVDYYTRAEGFNNES) the chain is Extracellular. Residue Asn-171 is glycosylated (N-linked (GlcNAc...) asparagine). Residues 174 to 195 (FVIYMFIVHFLIPLSVIFFCYG) traverse the membrane as a helical segment. The Cytoplasmic segment spans residues 196–223 (RLLCAVKEAPAAQQESETTQRAEKEVSR). A helical transmembrane segment spans residues 224–245 (MVVIMVIGFLVCWLPYASVAWW). The Extracellular portion of the chain corresponds to 246 to 257 (IFCNQGSDFGPI). A helical transmembrane segment spans residues 258–279 (FMTLPSFFAKSAAIYNPMIYIC). At Lys-267 the chain carries N6-(retinylidene)lysine. Residues 280 to 289 (MNKQFRHCMI) are Cytoplasmic-facing.

Belongs to the G-protein coupled receptor 1 family. Opsin subfamily. Phosphorylated on some or all of the serine and threonine residues present in the C-terminal region. Post-translationally, contains one covalently linked retinal chromophore.

The protein localises to the membrane. It localises to the cell projection. It is found in the cilium. The protein resides in the photoreceptor outer segment. Its function is as follows. Photoreceptor required for image-forming vision at low light intensity. While most salt water fish species use retinal as chromophore, most freshwater fish use 3-dehydroretinal, or a mixture of retinal and 3-dehydroretinal. Light-induced isomerization of 11-cis to all-trans retinal triggers a conformational change that activates signaling via G-proteins. Subsequent receptor phosphorylation mediates displacement of the bound G-protein alpha subunit by arrestin and terminates signaling. The polypeptide is Rhodopsin (rho) (Abyssocottus korotneffi (Baikalian deep-water sculpin)).